We begin with the raw amino-acid sequence, 115 residues long: NAD(P)H-quinone oxidoreductase subunit M (115 aa).

Belongs to the complex I NdhM subunit family. In terms of assembly, NDH-1 can be composed of about 15 different subunits; different subcomplexes with different compositions have been identified which probably have different functions.

The protein resides in the cellular thylakoid membrane. It carries out the reaction a plastoquinone + NADH + (n+1) H(+)(in) = a plastoquinol + NAD(+) + n H(+)(out). It catalyses the reaction a plastoquinone + NADPH + (n+1) H(+)(in) = a plastoquinol + NADP(+) + n H(+)(out). NDH-1 shuttles electrons from an unknown electron donor, via FMN and iron-sulfur (Fe-S) centers, to quinones in the respiratory and/or the photosynthetic chain. The immediate electron acceptor for the enzyme in this species is believed to be plastoquinone. Couples the redox reaction to proton translocation, and thus conserves the redox energy in a proton gradient. Cyanobacterial NDH-1 also plays a role in inorganic carbon-concentration. This is NAD(P)H-quinone oxidoreductase subunit M from Prochlorococcus marinus (strain MIT 9303).